The primary structure comprises 239 residues: Fatty acid metabolism regulator protein (239 aa).

The region spanning 6–74 (QSPAGFAEEY…HGKPTKINNF (69 aa)) is the HTH gntR-type domain. The segment at residues 34–53 (ERELSELIGVTRTTLREVLQ) is a DNA-binding region (H-T-H motif).

As to quaternary structure, homodimer.

Its subcellular location is the cytoplasm. Multifunctional regulator of fatty acid metabolism. The sequence is that of Fatty acid metabolism regulator protein from Pectobacterium atrosepticum (strain SCRI 1043 / ATCC BAA-672) (Erwinia carotovora subsp. atroseptica).